A 665-amino-acid chain; its full sequence is DNA ligase (665 aa).

NAD(+) is bound by residues D35–D39, S88–L89, and E117. Catalysis depends on K119, which acts as the N6-AMP-lysine intermediate. Residues R140, E174, K290, and K314 each contribute to the NAD(+) site. Positions 406, 409, 424, and 429 each coordinate Zn(2+). The region spanning K588–S665 is the BRCT domain.

Belongs to the NAD-dependent DNA ligase family. LigA subfamily. Requires Mg(2+) as cofactor. The cofactor is Mn(2+).

It catalyses the reaction NAD(+) + (deoxyribonucleotide)n-3'-hydroxyl + 5'-phospho-(deoxyribonucleotide)m = (deoxyribonucleotide)n+m + AMP + beta-nicotinamide D-nucleotide.. Functionally, DNA ligase that catalyzes the formation of phosphodiester linkages between 5'-phosphoryl and 3'-hydroxyl groups in double-stranded DNA using NAD as a coenzyme and as the energy source for the reaction. It is essential for DNA replication and repair of damaged DNA. In Metamycoplasma arthritidis (strain 158L3-1) (Mycoplasma arthritidis), this protein is DNA ligase.